A 702-amino-acid chain; its full sequence is Ferrioxamine B receptor (702 aa).

Residues 1–30 (MPLEMFMFATTRMALLIGGAIGGATFPLFA) form the signal peptide. Residues 55 to 168 (PDIETPQSVS…PGGIVALTSR (114 aa)) enclose the TBDR plug domain. The region spanning 173–702 (DAGGEVKLFA…SIVGSVSWAF (530 aa)) is the TBDR beta-barrel domain.

It belongs to the TonB-dependent receptor family.

It localises to the cell outer membrane. Functionally, ferrioxamine binding and uptake, in association with the TonB protein. The chain is Ferrioxamine B receptor (foxA) from Salmonella typhimurium (strain LT2 / SGSC1412 / ATCC 700720).